A 216-amino-acid polypeptide reads, in one-letter code: UDP-N-acetylglucosamine transferase subunit ALG14 (216 aa).

Residues M1–C3 lie on the Lumenal side of the membrane. A helical transmembrane segment spans residues V4–A24. Over V25–V216 the chain is Cytoplasmic.

The protein belongs to the ALG14 family. In terms of assembly, forms with ALG13 the active heterodimeric UDP-N-acetylglucosamine transferase complex.

It localises to the endoplasmic reticulum membrane. In terms of biological role, part of the UDP-N-acetylglucosamine transferase complex that operates in the biosynthetic pathway of dolichol-linked oligosaccharides, the glycan precursors employed in protein asparagine (N)-glycosylation. The assembly of dolichol-linked oligosaccharides begins on the cytosolic side of the endoplasmic reticulum membrane and finishes in its lumen. The sequential addition of sugars to dolichol pyrophosphate produces dolichol-linked oligosaccharides containing fourteen sugars, including two GlcNAcs, nine mannoses and three glucoses. Once assembled, the oligosaccharides are transferred from the lipid to nascent proteins by oligosaccharyltransferases. Functions as a protein-membrane adapter recruiting ALG13 at the cytoplasmic face of the endoplasmic reticulum, where the complex catalyzes the second step of dolichol pyrophosphate biosynthesis, transferring a beta1,4-linked N-acetylglucosamine (GlcNAc) from UDP-GlcNAc to GlcNAc-pyrophosphatedolichol (Gn-PDol) to produce N,N'-diacetylchitobiosyl diphosphodolichol. N,N'-diacetylchitobiosyl diphosphodolichol is a substrate for ALG1, the following enzyme in the biosynthetic pathway. This is UDP-N-acetylglucosamine transferase subunit ALG14 from Rattus norvegicus (Rat).